A 513-amino-acid polypeptide reads, in one-letter code: GMP synthase [glutamine-hydrolyzing] (513 aa).

The Glutamine amidotransferase type-1 domain occupies 3–200; it reads SVLVLDFGSQ…LINIAGIRPD (198 aa). Residue C80 is the Nucleophile of the active site. Residues H174 and E176 contribute to the active site. One can recognise a GMPS ATP-PPase domain in the interval 201–388; sequence WSSKSFIEHQ…LGIPEDILMR (188 aa). 228–234 provides a ligand contact to ATP; it reads SGGVDST.

As to quaternary structure, homodimer.

It carries out the reaction XMP + L-glutamine + ATP + H2O = GMP + L-glutamate + AMP + diphosphate + 2 H(+). It participates in purine metabolism; GMP biosynthesis; GMP from XMP (L-Gln route): step 1/1. Functionally, catalyzes the synthesis of GMP from XMP. The protein is GMP synthase [glutamine-hydrolyzing] of Chlorobium luteolum (strain DSM 273 / BCRC 81028 / 2530) (Pelodictyon luteolum).